We begin with the raw amino-acid sequence, 376 residues long: Nuclear egress protein 1 (376 aa).

Serine 19 carries the phosphoserine modification. The interval 22–57 (RKRRQRELASKVASTVNGATSANNHGEPPSPADARP) is disordered. Over residues 33–45 (VASTVNGATSANN) the composition is skewed to polar residues. The CCCH-type zinc-finger motif lies at 106 to 211 (CLDISPYGNE…HVIFENSDVH (106 aa)). A disordered region spans residues 316-376 (VVSTNGCGPS…PLFLNSIRAP (61 aa)). Positions 317–332 (VSTNGCGPSSSSQSTP) are enriched in polar residues.

It belongs to the herpesviridae NEC1 protein family. As to quaternary structure, forms a heterohexameric complex with NEC2. Interacts with capsid vertex specific component 2/CVC2; this interaction directs the capsid to the host inner nuclear membrane to initiate budding. In terms of processing, phosphorylated at serine residues in the N-terminus. This phosphorylation regulates the localization within the inner nuclear membrane. Phosphorylation by viral kinase UL97 at Ser-19 plays an important role for correct viral nuclear egress complex (NEC) localization.

The protein resides in the host nucleus inner membrane. Plays an essential role in virion nuclear egress, the first step of virion release from infected cell. Within the host nucleus, NEC1 interacts with the newly formed capsid through the vertexes and directs it to the inner nuclear membrane by associating with NEC2. Induces the budding of the capsid at the inner nuclear membrane as well as its envelopment into the perinuclear space. There, the NEC1/NEC2 complex promotes the fusion of the enveloped capsid with the outer nuclear membrane and the subsequent release of the viral capsid into the cytoplasm where it will reach the secondary budding sites in the host Golgi or trans-Golgi network. The sequence is that of Nuclear egress protein 1 from Homo sapiens (Human).